Here is a 480-residue protein sequence, read N- to C-terminus: Glycerol 3-phosphate dehydrogenase (480 aa).

FAD contacts are provided by residues isoleucine 12, glutamate 31, 40-41, and 45-47; these read TT and SAI. 2 residues coordinate sn-glycerol 3-phosphate: serine 45 and histidine 49. Histidine 49 (proton acceptor) is an active-site residue. Valine 172 is a binding site for FAD. Residues lysine 249 and arginine 310 each coordinate sn-glycerol 3-phosphate. Residue 335–336 coordinates FAD; it reads IE. Residue serine 337 participates in sn-glycerol 3-phosphate binding. Position 341 (serine 341) interacts with FAD. The [2Fe-2S] cluster site is built by cysteine 400, cysteine 402, cysteine 437, and cysteine 442.

It depends on [2Fe-2S] cluster as a cofactor.

The catalysed reaction is sn-glycerol 3-phosphate + A = dihydroxyacetone phosphate + AH2. Its pathway is polyol metabolism; glycerol degradation via glycerol kinase pathway; glycerone phosphate from sn-glycerol 3-phosphate (aerobic route): step 1/1. Catalyzes the dehydrogenation of glycerol 3-phosphate to dihydroxyacetone phosphate. Is probably involved in anaerobic glycerol metabolism. Active in vitro with the artificial electron acceptor 2,6-dichlorophenolindophenol (DCPIP), but not with NAD or NADP. Also displays a very low oxidase activity in vitro on glycerol 3-phosphate with O2 as the electron acceptor, but this activity is most likely not physiological. The chain is Glycerol 3-phosphate dehydrogenase from Caloramator mitchellensis.